The primary structure comprises 833 residues: Glycerol-3-phosphate acyltransferase (833 aa).

Positions C309–I314 match the HXXXXD motif motif.

This sequence belongs to the GPAT/DAPAT family.

Its subcellular location is the cell inner membrane. The catalysed reaction is sn-glycerol 3-phosphate + an acyl-CoA = a 1-acyl-sn-glycero-3-phosphate + CoA. The protein operates within phospholipid metabolism; CDP-diacylglycerol biosynthesis; CDP-diacylglycerol from sn-glycerol 3-phosphate: step 1/3. The polypeptide is Glycerol-3-phosphate acyltransferase (Pseudomonas savastanoi pv. phaseolicola (strain 1448A / Race 6) (Pseudomonas syringae pv. phaseolicola (strain 1448A / Race 6))).